Here is a 430-residue protein sequence, read N- to C-terminus: tRNA(Ile)-lysidine synthase (430 aa).

ATP is bound at residue Ser-21–Ser-26.

This sequence belongs to the tRNA(Ile)-lysidine synthase family.

Its subcellular location is the cytoplasm. It carries out the reaction cytidine(34) in tRNA(Ile2) + L-lysine + ATP = lysidine(34) in tRNA(Ile2) + AMP + diphosphate + H(+). In terms of biological role, ligates lysine onto the cytidine present at position 34 of the AUA codon-specific tRNA(Ile) that contains the anticodon CAU, in an ATP-dependent manner. Cytidine is converted to lysidine, thus changing the amino acid specificity of the tRNA from methionine to isoleucine. The chain is tRNA(Ile)-lysidine synthase from Salmonella paratyphi A (strain ATCC 9150 / SARB42).